The chain runs to 336 residues: MAAKVVLDFEKPLYELEEKLSEMRVYLKSGEFDARTESREGLRGEIEALEAKVESLRKTIYKNLTRWQKVQLARHPERPYTLDYIYMMTKDFVELSGDRQFGDDKAIIGGLARLEDKDSGFSQSVMVIGHQKGRDTKSNLYRNFGMAQPEGYRKALRLMKMAEKFGKPVITLIDTPGAFPGIEAEERGQAEAIARNLYEMAGLKVPVICVIIGEGASGGAIGIGVGDRILMAENSWYSVISPESCSSILWRSWNYKEQAAEALKLTADDLLAQGIIDRIVPEPLGGAHQKPEVMASTLKSMLIEELQGLLSKDASTLVDERIAKFSSMGVWNEAEA.

A CoA carboxyltransferase C-terminal domain is found at 48–308 (ALEAKVESLR…KSMLIEELQG (261 aa)).

Belongs to the AccA family. Acetyl-CoA carboxylase is a heterohexamer composed of biotin carboxyl carrier protein (AccB), biotin carboxylase (AccC) and two subunits each of ACCase subunit alpha (AccA) and ACCase subunit beta (AccD).

The protein resides in the cytoplasm. It catalyses the reaction N(6)-carboxybiotinyl-L-lysyl-[protein] + acetyl-CoA = N(6)-biotinyl-L-lysyl-[protein] + malonyl-CoA. The protein operates within lipid metabolism; malonyl-CoA biosynthesis; malonyl-CoA from acetyl-CoA: step 1/1. Component of the acetyl coenzyme A carboxylase (ACC) complex. First, biotin carboxylase catalyzes the carboxylation of biotin on its carrier protein (BCCP) and then the CO(2) group is transferred by the carboxyltransferase to acetyl-CoA to form malonyl-CoA. This chain is Acetyl-coenzyme A carboxylase carboxyl transferase subunit alpha, found in Chlorobaculum parvum (strain DSM 263 / NCIMB 8327) (Chlorobium vibrioforme subsp. thiosulfatophilum).